The primary structure comprises 624 residues: Bifunctional 3'-phosphoadenosine 5'-phosphosulfate synthase 1 (624 aa).

Met-1 is modified (N-acetylmethionine). The interval 1–225 is adenylyl-sulfate kinase; it reads MELPGSLCKK…VVELLQERDI (225 aa). Lys-12 is modified (N6-acetyllysine). 62 to 67 contacts ATP; it reads GAGKTT. Adenosine 5'-phosphosulfate is bound by residues 89-92, Phe-101, 106-109, 132-133, Lys-171, and 184-185; these read DNIR, REEN, IS, and GF. ATP-binding positions include Cys-207, Cys-212, 419–422, 521–525, and Ala-563; these read QLRN and GRDPA. Residues 234 to 624 form a sulfate adenylyltransferase region; it reads VKELYVPENK…AEYYKALEKA (391 aa).

In the N-terminal section; belongs to the APS kinase family. This sequence in the C-terminal section; belongs to the sulfate adenylyltransferase family. As to quaternary structure, homodimer.

It catalyses the reaction sulfate + ATP + H(+) = adenosine 5'-phosphosulfate + diphosphate. The catalysed reaction is adenosine 5'-phosphosulfate + ATP = 3'-phosphoadenylyl sulfate + ADP + H(+). The protein operates within sulfur metabolism; sulfate assimilation. In terms of biological role, bifunctional enzyme with both ATP sulfurylase and APS kinase activity, which mediates two steps in the sulfate activation pathway. The first step is the transfer of a sulfate group to ATP to yield adenosine 5'-phosphosulfate (APS), and the second step is the transfer of a phosphate group from ATP to APS yielding 3'-phosphoadenylylsulfate (PAPS: activated sulfate donor used by sulfotransferase). In mammals, PAPS is the sole source of sulfate; APS appears to be only an intermediate in the sulfate-activation pathway. Required for normal biosynthesis of sulfated L-selectin ligands in endothelial cells. The chain is Bifunctional 3'-phosphoadenosine 5'-phosphosulfate synthase 1 (PAPSS1) from Cavia porcellus (Guinea pig).